We begin with the raw amino-acid sequence, 420 residues long: Multifunctional CCA protein (420 aa).

ATP-binding residues include Gly8 and Arg11. Gly8 and Arg11 together coordinate CTP. Residues Asp21 and Asp23 each contribute to the Mg(2+) site. ATP-binding residues include Arg91, Arg137, and Arg140. CTP contacts are provided by Arg91, Arg137, and Arg140. One can recognise an HD domain in the interval 228–334 (TFVHTMLVLQ…LKLFNRLDVW (107 aa)).

Belongs to the tRNA nucleotidyltransferase/poly(A) polymerase family. Bacterial CCA-adding enzyme type 1 subfamily. As to quaternary structure, monomer. Can also form homodimers and oligomers. Mg(2+) serves as cofactor. The cofactor is Ni(2+).

It carries out the reaction a tRNA precursor + 2 CTP + ATP = a tRNA with a 3' CCA end + 3 diphosphate. The enzyme catalyses a tRNA with a 3' CCA end + 2 CTP + ATP = a tRNA with a 3' CCACCA end + 3 diphosphate. In terms of biological role, catalyzes the addition and repair of the essential 3'-terminal CCA sequence in tRNAs without using a nucleic acid template. Adds these three nucleotides in the order of C, C, and A to the tRNA nucleotide-73, using CTP and ATP as substrates and producing inorganic pyrophosphate. tRNA 3'-terminal CCA addition is required both for tRNA processing and repair. Also involved in tRNA surveillance by mediating tandem CCA addition to generate a CCACCA at the 3' terminus of unstable tRNAs. While stable tRNAs receive only 3'-terminal CCA, unstable tRNAs are marked with CCACCA and rapidly degraded. The protein is Multifunctional CCA protein of Pasteurella multocida (strain Pm70).